A 146-amino-acid chain; its full sequence is Transcriptional regulator MraZ (146 aa).

SpoVT-AbrB domains are found at residues 6-49 and 78-121; these read TYDH…TEEE and THEV…DQKS.

The protein belongs to the MraZ family. Forms oligomers.

Its subcellular location is the cytoplasm. The protein resides in the nucleoid. This is Transcriptional regulator MraZ from Mesoplasma florum (strain ATCC 33453 / NBRC 100688 / NCTC 11704 / L1) (Acholeplasma florum).